The primary structure comprises 438 residues: Choline monooxygenase, chloroplastic (438 aa).

Residues 1–58 (MAASATTMLLKYPTTVCGIPNSSANNSTDPSNNIVQIPQTTTTNSPLLKFRTPNKPVN) constitute a chloroplast transit peptide. The Rieske domain maps to 121–228 (WQVAGYSDQV…VAVWGPFILI (108 aa)). Cys163, His165, Cys182, and His185 together coordinate [2Fe-2S] cluster. His288 and His293 together coordinate Fe cation.

It belongs to the choline monooxygenase family. [2Fe-2S] cluster is required as a cofactor. Fe cation serves as cofactor. It depends on Mg(2+) as a cofactor. Expressed in roots and leaves.

Its subcellular location is the plastid. The protein resides in the chloroplast stroma. The catalysed reaction is choline + 2 reduced [2Fe-2S]-[ferredoxin] + O2 + 2 H(+) = betaine aldehyde hydrate + 2 oxidized [2Fe-2S]-[ferredoxin] + H2O. It functions in the pathway amine and polyamine biosynthesis; betaine biosynthesis via choline pathway; betaine aldehyde from choline (monooxygenase route): step 1/1. In terms of biological role, catalyzes the first step of the osmoprotectant glycine betaine synthesis. The sequence is that of Choline monooxygenase, chloroplastic (CMO) from Atriplex hortensis (Mountain spinach).